The sequence spans 259 residues: Ovulation prohormone (259 aa).

The signal sequence occupies residues M1–A34. The propeptide occupies L35 to A102. Residues R42 to K103 are disordered. Repeats lie at residues R119–H123 and R146–H150. The interval R119–H150 is 2 X 5 AA repeats of R-L-R-F-H. Residues F149 to R197 form a disordered region. Residues S181–S195 constitute a propeptide that is removed on maturation. L233 carries the leucine amide modification. A propeptide spanning residues G237–K259 is cleaved from the precursor.

The protein belongs to the molluscan ELH family.

Its subcellular location is the secreted. Functionally, CDCH induces ovulation and egg-mass production; it may also stimulate synthesis of secretory products in the female accessory sex glands and affect neurons in the neuronal circuits controlling locomotion and feeding. In terms of biological role, calfluxin is involved in the influx of calcium into mitochondria of the albumen gland. Its function is as follows. CDCA (or alpha-CDCP) triggers the electrical activity of the caudodorsal cells (CDCS). This is Ovulation prohormone from Lymnaea stagnalis (Great pond snail).